The chain runs to 118 residues: Large ribosomal subunit protein bL20 (118 aa).

Belongs to the bacterial ribosomal protein bL20 family.

Functionally, binds directly to 23S ribosomal RNA and is necessary for the in vitro assembly process of the 50S ribosomal subunit. It is not involved in the protein synthesizing functions of that subunit. The chain is Large ribosomal subunit protein bL20 from Aeromonas hydrophila subsp. hydrophila (strain ATCC 7966 / DSM 30187 / BCRC 13018 / CCUG 14551 / JCM 1027 / KCTC 2358 / NCIMB 9240 / NCTC 8049).